Reading from the N-terminus, the 71-residue chain is Conotoxin AbVIG (71 aa).

Positions 1–17 (VLIIAVLFLTACQLTTA) are cleaved as a signal peptide. Residues 18–40 (ETSSRGKQKHRALRSTDKNSRMT) constitute a propeptide that is removed on maturation. Disulfide bonds link cysteine 43–cysteine 57, cysteine 50–cysteine 61, and cysteine 56–cysteine 68.

It belongs to the conotoxin O1 superfamily. Expressed by the venom duct.

The protein resides in the secreted. This chain is Conotoxin AbVIG, found in Conus abbreviatus (Abbreviated cone).